We begin with the raw amino-acid sequence, 441 residues long: Amino-acid acetyltransferase (441 aa).

Residues 295–434 (EKVRGAGIDD…KALYNFQRRS (140 aa)) form the N-acetyltransferase domain.

The protein belongs to the acetyltransferase family. ArgA subfamily.

The protein resides in the cytoplasm. The enzyme catalyses L-glutamate + acetyl-CoA = N-acetyl-L-glutamate + CoA + H(+). It functions in the pathway amino-acid biosynthesis; L-arginine biosynthesis; N(2)-acetyl-L-ornithine from L-glutamate: step 1/4. The protein is Amino-acid acetyltransferase of Photobacterium profundum (strain SS9).